Reading from the N-terminus, the 427-residue chain is 3-phosphoshikimate 1-carboxyvinyltransferase (427 aa).

3 residues coordinate 3-phosphoshikimate: K20, S21, and R25. K20 contributes to the phosphoenolpyruvate binding site. 2 residues coordinate phosphoenolpyruvate: G92 and R120. 3-phosphoshikimate-binding residues include S166, Q168, D312, and K339. Residue Q168 participates in phosphoenolpyruvate binding. D312 functions as the Proton acceptor in the catalytic mechanism. Phosphoenolpyruvate is bound by residues R343 and R385.

Belongs to the EPSP synthase family. In terms of assembly, monomer.

Its subcellular location is the cytoplasm. It catalyses the reaction 3-phosphoshikimate + phosphoenolpyruvate = 5-O-(1-carboxyvinyl)-3-phosphoshikimate + phosphate. It functions in the pathway metabolic intermediate biosynthesis; chorismate biosynthesis; chorismate from D-erythrose 4-phosphate and phosphoenolpyruvate: step 6/7. Functionally, catalyzes the transfer of the enolpyruvyl moiety of phosphoenolpyruvate (PEP) to the 5-hydroxyl of shikimate-3-phosphate (S3P) to produce enolpyruvyl shikimate-3-phosphate and inorganic phosphate. This Streptococcus pyogenes serotype M4 (strain MGAS10750) protein is 3-phosphoshikimate 1-carboxyvinyltransferase.